The primary structure comprises 284 residues: NH(3)-dependent NAD(+) synthetase (284 aa).

41 to 48 (GLSGGVDS) lines the ATP pocket. A Mg(2+)-binding site is contributed by D47. R127 contributes to the deamido-NAD(+) binding site. T147 contacts ATP. Residue E152 coordinates Mg(2+). Residue D167 coordinates deamido-NAD(+). The ATP site is built by K176 and S199. The interval 264–284 (FKRRPAPGLDLPEPEDPAMSG) is disordered. The span at 275-284 (PEPEDPAMSG) shows a compositional bias: acidic residues.

This sequence belongs to the NAD synthetase family. As to quaternary structure, homodimer.

The enzyme catalyses deamido-NAD(+) + NH4(+) + ATP = AMP + diphosphate + NAD(+) + H(+). It functions in the pathway cofactor biosynthesis; NAD(+) biosynthesis; NAD(+) from deamido-NAD(+) (ammonia route): step 1/1. Functionally, catalyzes the ATP-dependent amidation of deamido-NAD to form NAD. Uses ammonia as a nitrogen source. The protein is NH(3)-dependent NAD(+) synthetase of Methanopyrus kandleri (strain AV19 / DSM 6324 / JCM 9639 / NBRC 100938).